A 72-amino-acid polypeptide reads, in one-letter code: Translation initiation factor IF-1 (72 aa).

The S1-like domain occupies 1-72; it reads MSKEDSFEME…SKGRITYRAR (72 aa).

It belongs to the IF-1 family. In terms of assembly, component of the 30S ribosomal translation pre-initiation complex which assembles on the 30S ribosome in the order IF-2 and IF-3, IF-1 and N-formylmethionyl-tRNA(fMet); mRNA recruitment can occur at any time during PIC assembly.

It is found in the cytoplasm. Its function is as follows. One of the essential components for the initiation of protein synthesis. Stabilizes the binding of IF-2 and IF-3 on the 30S subunit to which N-formylmethionyl-tRNA(fMet) subsequently binds. Helps modulate mRNA selection, yielding the 30S pre-initiation complex (PIC). Upon addition of the 50S ribosomal subunit IF-1, IF-2 and IF-3 are released leaving the mature 70S translation initiation complex. In Pseudomonas syringae pv. tomato (strain ATCC BAA-871 / DC3000), this protein is Translation initiation factor IF-1.